An 804-amino-acid chain; its full sequence is Leucine--tRNA ligase (804 aa).

A 'HIGH' region motif is present at residues 39–50 (PFPSGKGLHVGH). Positions 573–577 (KMSKS) match the 'KMSKS' region motif. An ATP-binding site is contributed by Lys576.

Belongs to the class-I aminoacyl-tRNA synthetase family.

It localises to the cytoplasm. It carries out the reaction tRNA(Leu) + L-leucine + ATP = L-leucyl-tRNA(Leu) + AMP + diphosphate. The sequence is that of Leucine--tRNA ligase from Lactobacillus gasseri (strain ATCC 33323 / DSM 20243 / BCRC 14619 / CIP 102991 / JCM 1131 / KCTC 3163 / NCIMB 11718 / NCTC 13722 / AM63).